The following is a 416-amino-acid chain: Polyadenylation and cleavage factor homolog 1 (416 aa).

Polar residues predominate over residues 1-17; that stretch reads MASNGSFSAQRNANART. Residues 1–80 form a disordered region; the sequence is MASNGSFSAQ…NNNNVSRVSS (80 aa). Residues 70–80 show a composition bias toward low complexity; sequence SNNNNVSRVSS. The stretch at 199–220 forms a coiled coil; the sequence is KELTDLLSLLNNEKEKKTLEAS. Residues 254-276 form a C2H2-type zinc finger; the sequence is RQCSSCGLRFKCQEEHSKHMDWH.

Forms a complex with cleavage and polyadenylation specificity factor (CPSF) subunits CLPS3, CLPS5, CPSF30, PCFS4, PCFS5, CSTF77 and FIPS3.

The protein resides in the nucleus. This is Polyadenylation and cleavage factor homolog 1 from Arabidopsis thaliana (Mouse-ear cress).